A 1602-amino-acid polypeptide reads, in one-letter code: MNQNQIQQLTSHLSQALDQNYDVVNMDAVLSVICALEGTTITKEQLEATRLAKYINQLRRRTKNEHLARRAKSLLKMWREMVGIQQTANDSQHHHSQPTSLPTPPSAHFYKYTAGSADSNLTETVVHLPVSPSVPSHRTISDLHSNIDSSEPPPAVLPSQHQSNFLNLINNISKCEREESNSSMLIQAHKQPQSQQFQNRPLGLPLPFISEQSLNSVSISSDVGNDKKGEASIVIDIVTDSDENDNESASTIQGKPTAAASAPFTISPAPCPRPKKFKKDKKHKERDRSKSSLLAQNELIGQHSSRYSAKVKEGQSQTAQATDSEIFSLSNSSMSSILSGDAALLNPQHKFRANASELTFTGRFKPVNHLDSANQDNSALPIGQNIVFRQNESERPIFEDSITNDSSTSCSRLSPPTVEERRKSDKIDDSIRQQIATSIQMPMPSIGLGHESNSRTEYLENSSKSQVPKKRGRKKGSKGVDAVIAKESSSLSQQIFFGVGSTVKKVKTTKELFSEIQSRKLITAVQSPTSNISNSSISRELTTRALMPRPTSSCSDTSIHSPQIMETYSGNVTLMGVDKFSNKNEDAGNTDSDTITSEPSQDSNKSQEIKECTSLDSNSNSLQTLSLAKKSMHTSKSENYSDVTTQLMHLIHSIKGPLSVYEVEKLYRAQIVPCTCLVIEEICNPFGEPINLSSDNGVGDPKSDSNNDNVSRHKKQEEQLPKLERLSDNDFSMDTPQKPVKSIFDLDFDEDEDPLQSIINDIRMPPTKLEETKENADLKNALAHLPMNISSLDVASVNADTVQNQINSHNQEGETSEEQNVAIPVFTCHEDPDCVAKQRFHVQTNKVNNFHINALHNFYIPNINGNWDSIDSSIVSESTITDFLNTLGSYTVTDGADVVPKYGSLTYDRIRKDLSSIKFTSSFKTRPLKSFMPPFLGVAKCLPTCRLARSSFKKKQIQSPPPPLIVIPSTIEGLDPDIMQKDYNGGSPLKVDVDVLVSGHDNNESNVQMQVNLQTKSDPTLSYNLLKLANDELPFEETEPNDKGSEYENQDNGRFSSSSNSSCSNSSNSSLKKTQDSINEKLRNQRSQRYRVQSVEEETNRKRRGKNRKKRNIKENPPIKRIKISLNGTISNLSSSNNSSSSESETETGLENENEVENDYENNNDEEYAVVQRPTCGDGASNNHIVMTIKKTPSKINSPANSMSATSPINASETRNVKNAFSDSNRPNLLTSSTSIAPLYQIDGGRRLLLSKKFSRRPHRRRRYRQCRRKSDLQRKAIDLELKHLFTYKTKPDLDIGSAIKLHKKLFFSHELCKQNTAGRKERILNYSSSSSSNYDDDESDLDGLSSEETAADLKENVNTFNKYNLNIETDNTSAERTVSEDPLKIEEDPYLTSSSNDVTDSDNESDNHEVFDEVAKRVEADEFNELHNNGMLTSFNSISVENQLINEPTLMAVSGSVDTPAPQSNASLASLQNENCDDVNNLCYNNNNLDVIKHSLAASPILNDINYKNVISNTSPRVLANKFSDCIPQNIGNSELSPPIPLPCAEYQTGIRPAPLTDLALSSYADFRCTRIQQFKEWHQVLQLQSYNNEPLIVLPYVVLE.

One can recognise a TFIIS N-terminal domain in the interval 8–85 (QLTSHLSQAL…KMWREMVGIQ (78 aa)). 5 disordered regions span residues 86–108 (QTAN…PSAH), 238–298 (VTDS…AQNE), 399–481 (EDSI…KGVD), 580–617 (FSNK…SLDS), and 694–736 (SDNG…MDTP). Residues 273–285 (RPKKFKKDKKHKE) are compositionally biased toward basic residues. Polar residues predominate over residues 401–414 (SITNDSSTSCSRLS). The segment covering 418-431 (VEERRKSDKIDDSI) has biased composition (basic and acidic residues). A compositionally biased stretch (basic residues) spans 467–477 (VPKKRGRKKGS). Positions 587–604 (AGNTDSDTITSEPSQDSN) are enriched in polar residues. Positions 715-728 (KQEEQLPKLERLSD) are enriched in basic and acidic residues. The stretch at 792–820 (LDVASVNADTVQNQINSHNQEGETSEEQN) forms a coiled coil. Disordered stretches follow at residues 1035-1158 (FEET…EVEN) and 1372-1407 (NTSA…NESD). A compositionally biased stretch (low complexity) spans 1056-1070 (SSSSNSSCSNSSNSS). Basic and acidic residues predominate over residues 1073 to 1083 (KTQDSINEKLR). Residues 1101–1112 (RKRRGKNRKKRN) show a composition bias toward basic residues. A compositionally biased stretch (low complexity) spans 1124 to 1143 (ISLNGTISNLSSSNNSSSSE). Over residues 1144–1158 (SETETGLENENEVEN) the composition is skewed to acidic residues. The span at 1378–1388 (TVSEDPLKIEE) shows a compositional bias: basic and acidic residues.

This sequence belongs to the Mediator complex subunit 26 family. In terms of assembly, component of the Mediator complex.

Its subcellular location is the nucleus. Its function is as follows. Component of the Mediator complex, a coactivator involved in the regulated transcription of nearly all RNA polymerase II-dependent genes. Mediator functions as a bridge to convey information from gene-specific regulatory proteins to the basal RNA polymerase II transcription machinery. Mediator is recruited to promoters by direct interactions with regulatory proteins and serves as a scaffold for the assembly of a functional preinitiation complex with RNA polymerase II and the general transcription factors. This chain is Mediator of RNA polymerase II transcription subunit 26 (MED26), found in Drosophila pseudoobscura pseudoobscura (Fruit fly).